A 394-amino-acid polypeptide reads, in one-letter code: Proliferation-associated protein 2G4 (394 aa).

Residue S2 is modified to N-acetylserine. Position 2 is a phosphoserine (S2). Residues 2–48 (SGEDEQQEQTIAEDLVVTKYKMGGDIANRVLRSLVEASSSGVSVLSL) form a necessary for nucleolar localization region. The tract at residues 46–54 (LSLCEKGDA) is RNA-binding. K298 participates in a covalent cross-link: Glycyl lysine isopeptide (Lys-Gly) (interchain with G-Cter in SUMO2). The necessary for nucleolar localization stretch occupies residues 301–394 (LLQPFNVLYE…ETLEENGAGD (94 aa)). Phosphoserine is present on S335. The tract at residues 358 to 394 (LQSSASRKTQKKKKKKASKTAENATSGETLEENGAGD) is disordered. Residue S361 is modified to Phosphoserine; by PKC/PRKCD. The tract at residues 361-375 (SASRKTQKKKKKKAS) is interaction with RNA. The segment covering 365-375 (KTQKKKKKKAS) has biased composition (basic residues). A phosphothreonine mark is found at T366 and T386.

It belongs to the peptidase M24 family. In terms of assembly, isoform 2 interacts with the cytoplasmic domain of non-phosphorylated ERBB3; the interaction requires PKC activity. Interacts with AR. Treatment with HRG leads to dissociation from ERBB3 and increases association with AR. Interacts with nucleolin/NCL. Component of a ribonucleoprotein complex containing at least PA2G4, NCL, TOP1, PABPC2, RPLP0, acetylated histone H1 (HIST1H1A or H1F1), histone H1 2/4, RPL4, RPL8, RPL15, RPL18, RPL18A, RPL21, RPL11, RPL12, RPL28, RPL27, RPLP2 and RPL24. Interacts with HDAC2. Interacts with RB1; the interaction is enhanced upon PA2G4 dephosphorylation. Isoform 1 and isoform 2 interact with RNF20. Isoform 2 interacts with HUWE1. Interacts with AKT1. Interacts with DNAJC21. Post-translationally, phosphorylated on serine and threonine residues. Phosphorylation is enhanced by HRG treatment. Basal phosphorylation is PKC-dependent and HRG-induced phosphorylation is predominantly PKC-independent. Phosphorylation at Ser-361 by PKC/PRKCD regulates its nucleolar localization. Isoform 2 is polyubiquitinated, leading to proteasomal degradation and phosphorylation by PKC/PRKCD enhances polyubiquitination.

The protein resides in the cytoplasm. It is found in the nucleus. It localises to the nucleolus. May play a role in a ERBB3-regulated signal transduction pathway. Seems be involved in growth regulation. Acts a corepressor of the androgen receptor (AR) and is regulated by the ERBB3 ligand neuregulin-1/heregulin (HRG). Inhibits transcription of some E2F1-regulated promoters, probably by recruiting histone acetylase (HAT) activity. Binds RNA. Associates with 28S, 18S and 5.8S mature rRNAs, several rRNA precursors and probably U3 small nucleolar RNA. May be involved in regulation of intermediate and late steps of rRNA processing. May be involved in ribosome assembly. Mediates cap-independent translation of specific viral IRESs (internal ribosomal entry site). Together with PTBP1 is required for the translation initiation on the foot-and-mouth disease virus (FMDV) IRES. Regulates cell proliferation, differentiation, and survival. Isoform 1 suppresses apoptosis whereas isoform 2 promotes cell differentiation. In Rattus norvegicus (Rat), this protein is Proliferation-associated protein 2G4 (Pa2g4).